Consider the following 312-residue polypeptide: MAVHQYTVALFLAVALVAGPAASYAADLGYGPATPAAPAAGYTPATPAAPAEAAPAGKATTEEQKLIEKINAGFKAALAAAAGVQPADKYRTFVATFGAASNKAFAEGLSGEPKGAAESSSKAALTSKLDAAYKLAYKTAEGATPEAKYDAYVATLSEALRIIAGTLEVHAVKPAAEEVKVIPAGELQVIEKVDAAFKVAATAANAAPANDKFTVFEAAFNDAIKASTGGAYESYKFIPALEAAVKQAYAATVATAPEVKYTVFETALKKAITAMSEAQKAAKPAAAATATATAAVGAATGAATAATGGYKV.

A signal peptide spans 1-25 (MAVHQYTVALFLAVALVAGPAASYA).

It belongs to the Poa p IX/Phl p VI allergen family.

The protein resides in the secreted. This chain is Pollen allergen Phl p 5.0101, found in Phleum pratense (Common timothy).